A 204-amino-acid polypeptide reads, in one-letter code: High frequency lysogenization protein HflD homolog (204 aa).

This sequence belongs to the HflD family.

It is found in the cytoplasm. The protein localises to the cell inner membrane. In Xanthomonas campestris pv. campestris (strain ATCC 33913 / DSM 3586 / NCPPB 528 / LMG 568 / P 25), this protein is High frequency lysogenization protein HflD homolog.